The chain runs to 602 residues: Glutamine--fructose-6-phosphate aminotransferase [isomerizing] (602 aa).

C2 serves as the catalytic Nucleophile; for GATase activity. The region spanning 2–217 (CGIVGVVGNT…DQELVIVKAD (216 aa)) is the Glutamine amidotransferase type-2 domain. Residues 67-87 (IGHTRWATHGKPTEDNAHPHR) form a disordered region. Residues 77 to 87 (KPTEDNAHPHR) show a composition bias toward basic and acidic residues. 2 SIS domains span residues 283-422 (IIKA…ANGN) and 455-592 (VREL…VDKP). The active-site For Fru-6P isomerization activity is the K597.

Homodimer.

The protein localises to the cytoplasm. It carries out the reaction D-fructose 6-phosphate + L-glutamine = D-glucosamine 6-phosphate + L-glutamate. In terms of biological role, catalyzes the first step in hexosamine metabolism, converting fructose-6P into glucosamine-6P using glutamine as a nitrogen source. This Streptococcus pneumoniae serotype 4 (strain ATCC BAA-334 / TIGR4) protein is Glutamine--fructose-6-phosphate aminotransferase [isomerizing].